A 316-amino-acid polypeptide reads, in one-letter code: MPSQNYSIISEFNLFGFSAFPQHLLPILFLLYLLMFLFTLLGNLLIMATIWIEHRLHTPMYLFLCTLSVSEILFTVAITPRMLADLLSTHHSITFVACANQMFFSFMFGFTHSFLLLVMGYDRYVAICHPLRYNVLMSPRDCAHLVACTWAGGSVMGMMVTTIVFHLTFCGSNVIHHFFCHVLSLLKLACENKTSSVIMGVMLVCVTALIGCLFLIILSYVFIVAAILRIPSAEGRHKTFSTCVSHLTVVVTHYSFASFIYLKPKGLHSMYSDALMATTYTVFTPFLSPIIFSLRNKELKNAINKNFYRKFCPPSS.

The Extracellular portion of the chain corresponds to 1–26 (MPSQNYSIISEFNLFGFSAFPQHLLP). Asn-5 is a glycosylation site (N-linked (GlcNAc...) asparagine). A helical membrane pass occupies residues 27–47 (ILFLLYLLMFLFTLLGNLLIM). Residues 48–55 (ATIWIEHR) lie on the Cytoplasmic side of the membrane. A helical transmembrane segment spans residues 56-76 (LHTPMYLFLCTLSVSEILFTV). The Extracellular portion of the chain corresponds to 77 to 100 (AITPRMLADLLSTHHSITFVACAN). Cys-98 and Cys-190 are joined by a disulfide. A helical membrane pass occupies residues 101-121 (QMFFSFMFGFTHSFLLLVMGY). Over 122-140 (DRYVAICHPLRYNVLMSPR) the chain is Cytoplasmic. A helical transmembrane segment spans residues 141 to 161 (DCAHLVACTWAGGSVMGMMVT). Residues 162–198 (TIVFHLTFCGSNVIHHFFCHVLSLLKLACENKTSSVI) lie on the Extracellular side of the membrane. A helical membrane pass occupies residues 199–219 (MGVMLVCVTALIGCLFLIILS). Topologically, residues 220-239 (YVFIVAAILRIPSAEGRHKT) are cytoplasmic. Residues 240-260 (FSTCVSHLTVVVTHYSFASFI) form a helical membrane-spanning segment. Topologically, residues 261 to 273 (YLKPKGLHSMYSD) are extracellular. A helical membrane pass occupies residues 274–294 (ALMATTYTVFTPFLSPIIFSL). At 295–316 (RNKELKNAINKNFYRKFCPPSS) the chain is on the cytoplasmic side.

The protein belongs to the G-protein coupled receptor 1 family.

It localises to the cell membrane. Its function is as follows. Odorant receptor. This chain is Olfactory receptor 10H4 (OR10H4), found in Homo sapiens (Human).